A 265-amino-acid chain; its full sequence is Membrane steroid-binding protein 2 (265 aa).

A helical membrane pass occupies residues 63–85 (WAAARSASPVAVIAAVAGAAVVY). Residues 94-116 (PPPPPARPREEPSEEAPPPPEPV) form a disordered region. Residues 118 to 217 (VGEITAEELL…SKYVKVGTIK (100 aa)) enclose the Cytochrome b5 heme-binding domain. Residues 120 to 217 (EITAEELLQY…SKYVKVGTIK (98 aa)) are steroid-binding.

It belongs to the cytochrome b5 family. MAPR subfamily.

It localises to the cell membrane. In terms of biological role, binds multiple steroid compounds. The polypeptide is Membrane steroid-binding protein 2 (Oryza sativa subsp. japonica (Rice)).